Reading from the N-terminus, the 284-residue chain is MNFIDQLARAERLHDSLLCVGLDPEPGKFPGAWKGDAGKIFDFCAAIVDATKDLVIAFKPQIAYFAAHRAEDQLERLMAYIKRTAPDVPVILDAKRGDIGSTAEQYAREAFERYQADAVTLSPFMGFDSIEPYLRYADKGVILLCRTSNPGGNDWQMQRLADVPGQPRLFEHLAHRAQTEWNRNGQLALVVGATYPAEIARVRELAPTLPLLIPGVGAQGGDAQATVQAGLVCDASGASTGPIIVNSSRAVLYASAGDDFAQAARRVALATRDALNAASAAARR.

The active-site Proton donor is lysine 95.

It belongs to the OMP decarboxylase family. Type 2 subfamily.

The catalysed reaction is orotidine 5'-phosphate + H(+) = UMP + CO2. Its pathway is pyrimidine metabolism; UMP biosynthesis via de novo pathway; UMP from orotate: step 2/2. This Leptothrix cholodnii (strain ATCC 51168 / LMG 8142 / SP-6) (Leptothrix discophora (strain SP-6)) protein is Orotidine 5'-phosphate decarboxylase.